A 384-amino-acid polypeptide reads, in one-letter code: Outer membrane protein assembly factor BamC (384 aa).

The N-terminal stretch at 1–23 (MNKLNSVVVARGAVAVLLIGLAG) is a signal peptide. Residue Cys-24 is the site of N-palmitoyl cysteine attachment. A lipid anchor (S-diacylglycerol cysteine) is attached at Cys-24. Disordered stretches follow at residues 47 to 70 (LEVP…TSGK) and 251 to 273 (QAAQ…SGTL).

The protein belongs to the BamC family. As to quaternary structure, part of the Bam complex.

The protein resides in the cell outer membrane. Part of the outer membrane protein assembly complex, which is involved in assembly and insertion of beta-barrel proteins into the outer membrane. This Accumulibacter regalis protein is Outer membrane protein assembly factor BamC.